Here is a 390-residue protein sequence, read N- to C-terminus: Guanidine hydrolase (390 aa).

Positions 174, 199, 201, 203, 291, and 293 each coordinate Ni(2+).

This sequence belongs to the arginase family. Homohexamer. It depends on Ni(2+) as a cofactor.

The protein localises to the cytoplasm. It carries out the reaction guanidine + H2O = urea + NH4(+). Activation of GdmH depends on the presence of the accessory proteins GhaA (Sll1078) and GhaB (Sll1079), which load nickel into the active site. Hydrolase activity is slightly activated in the presence of GTP. It does not require ATP or NAD(P)H. Addition of Ca(2+), Mn(2+), Fe(2+) or Fe(3+) has no consistent effects, whereas addition of Co(2+), Cu(2+) or Zn(2+) inhibits the activity. Catalyzes the hydrolysis of guanidine into urea and ammonium. Is highly specific for free guanidine. At pH 8, also catalyzes the release of urea from methylguanidine but with significantly reduced specific activity compared with that for guanidine. Cannot hydrolyze guanidinoacetate, guanidinopropionate, guanidinobutyrate, agmatine, arginine or creatine. Required to use guanidine as the sole nitrogen source for growth. Overexpression of the gene accelerates guanidine degradation and promotes biomass growth. This chain is Guanidine hydrolase, found in Synechocystis sp. (strain ATCC 27184 / PCC 6803 / Kazusa).